A 468-amino-acid chain; its full sequence is N-acyl-phosphatidylethanolamine-hydrolyzing phospholipase D, mitochondrial (468 aa).

The transit peptide at 1-39 (MNFVTCHVQMRLLLQRRLVRLRESELFRPQTSLSTFKRH) directs the protein to the mitochondrion. Residues 54–76 (YARILLLSVLVPYTGYAFYVSLA) form a helical membrane-spanning segment. Residues H265, H267, D269, H270, H332, and H425 each coordinate Zn(2+).

This sequence belongs to the NAPE-PLD family. Zn(2+) is required as a cofactor.

It localises to the mitochondrion membrane. It carries out the reaction an N-acyl-1,2-diacyl-sn-glycero-3-phosphoethanolamine + H2O = an N-acylethanolamine + a 1,2-diacyl-sn-glycero-3-phosphate + H(+). In terms of biological role, hydrolyzes N-acyl-phosphatidylethanolamines (NAPEs) to produce N-acylethanolamines (NAEs). The protein is N-acyl-phosphatidylethanolamine-hydrolyzing phospholipase D, mitochondrial (FMP30) of Saccharomyces cerevisiae (strain ATCC 204508 / S288c) (Baker's yeast).